We begin with the raw amino-acid sequence, 201 residues long: MDADSSSRSPRDTRTCARPKEKVPYFADEGRERDRVRNLRHRKTSITRPTTSHRGRPMRARSRSYSAERNCCQRRRRSRSCERRHSDTRHKLTTATVTKQRRRRSRSRSRSRSRTPRIITVPVPVPAADYPYAYAWPPPPQAPQFNPMYGAVPYGMPSRPVYPAHPYFAPYPRPRLTFPYRAPPFRPHPRFSYRNQRPAPN.

Residues 1-117 (MDADSSSRSP…RSRSRSRTPR (117 aa)) form a disordered region. Over residues 9–37 (SPRDTRTCARPKEKVPYFADEGRERDRVR) the composition is skewed to basic and acidic residues. 2 stretches are compositionally biased toward basic residues: residues 38-62 (NLRH…RARS) and 99-115 (KQRR…RSRT).

The protein localises to the nucleus speckle. Its function is as follows. Member of the regulatory pathway controlling female somatic sexual differentiation, regulated by Sxl. Activates dsx female-specific splicing by promoting the formation of a splicing enhancer complex which consists of tra, tra2 and sr proteins. The chain is Female-specific protein transformer (tra) from Drosophila hydei (Fruit fly).